A 248-amino-acid chain; its full sequence is MEAVILFPAIDLKNGQCVRLEQGDMARATVFNLDPAAQARSFQDQGFEYLHVVDLDGAFAGKPQNAQAVEAMLKTVTMPVQLGGGIRDMATLQAWLDKGIARVIIGTAAVRDPAFVKEAAKKHPGRVAVGLDARDGKVAVEGWAETSTVTALEIAQRFEDAGVAAIIFTDIARDGLLKGLNLDATIALADAISIPVIASGGLASIDDVKALLTPRAKKLEGAISGRALYDGRIDPAEALALIKAARAA.

Asp-11 functions as the Proton acceptor in the catalytic mechanism. The active-site Proton donor is Asp-132.

Belongs to the HisA/HisF family.

Its subcellular location is the cytoplasm. It catalyses the reaction 1-(5-phospho-beta-D-ribosyl)-5-[(5-phospho-beta-D-ribosylamino)methylideneamino]imidazole-4-carboxamide = 5-[(5-phospho-1-deoxy-D-ribulos-1-ylimino)methylamino]-1-(5-phospho-beta-D-ribosyl)imidazole-4-carboxamide. It participates in amino-acid biosynthesis; L-histidine biosynthesis; L-histidine from 5-phospho-alpha-D-ribose 1-diphosphate: step 4/9. This chain is 1-(5-phosphoribosyl)-5-[(5-phosphoribosylamino)methylideneamino] imidazole-4-carboxamide isomerase, found in Afipia carboxidovorans (strain ATCC 49405 / DSM 1227 / KCTC 32145 / OM5) (Oligotropha carboxidovorans).